The following is a 668-amino-acid chain: Kinesin-like protein KIF2B (668 aa).

At T125 the chain carries Phosphothreonine; by PLK1. Positions 149–177 (CLREIEKLQKQREKRRRLQLEIRARRALD) form a coiled coil. S204 bears the Phosphoserine; by PLK1 mark. In terms of domain architecture, Kinesin motor spans 213–543 (RICVCVRKRP…LRYANRVKEL (331 aa)). An ATP-binding site is contributed by 303-310 (GQTGSGKT). Basic and acidic residues predominate over residues 585-604 (PTVEKEEEKESDELTSKKEP). The disordered stretch occupies residues 585-605 (PTVEKEEEKESDELTSKKEPA). The stretch at 646–667 (VLTDIQKKLQSLREDLQKKSQV) forms a coiled coil.

It belongs to the TRAFAC class myosin-kinesin ATPase superfamily. Kinesin family. MCAK/KIF2 subfamily. Post-translationally, phosphorylation at Thr-125 by PLK1 is required for activity in the correction of kinetochore-microtubules attachment errors, while phosphorylation at Ser-204 also by PLK1 is required for the kinetochore localization and activity in prometaphase.

It is found in the cytoplasm. The protein localises to the cytoskeleton. Its subcellular location is the microtubule organizing center. The protein resides in the centrosome. It localises to the spindle. It is found in the chromosome. The protein localises to the centromere. Its subcellular location is the kinetochore. Plus end-directed microtubule-dependent motor required for spindle assembly and chromosome movement during mitosis. Has microtubule depolymerization activity. Plays a role in chromosome congression. The sequence is that of Kinesin-like protein KIF2B (Kif2b) from Mus musculus (Mouse).